The chain runs to 520 residues: MAAAAAAAGAAGSAAPAAAAGAPGSGGAPSGSQGVLIGDRLYSGVLITLENCLLPDDKLRFTPSMSSGLDTDTETDLRVVGCELIQAAGILLRLPQVAMATGQVLFQRFFYTKSFVKHSMEHVSMACVHLASKIEEAPRRIRDVINVFHRLRQLRDKKKPVPLLLDQDYVNLKNQIIKAERRVLKELGFCVHVKHPHKIIVMYLQVLECERNQHLVQTSWNYMNDSLRTDVFVRFQPESIACACIYLAARTLEIPLPNRPHWFLLFGATEEEIQEICLKILQLYARKKVDLTHLEGEVEKRKHAIEEAKAQARGLLPGGTQVLDGTSGFSPAPKLVESPKEGKGSKPSPLSVKNTKRRLEGAKKAKADSPVNGLPKGRESRSRSRSREQSYSRSPSRSASPKRRKSDSGSTSGGSKSQSRSRSRSDSPPRQAPRSAPYKGSEIRGSRKSKDCKYPQKPHKSRSRSSSRSRSRSRERADNPGKYKKKSHYYRDQRRERSRSYERTGRRYERDHPGHSRHRR.

At Ala-2 the chain carries N-acetylalanine. Cyclin-like stretches follow at residues 83 to 185 and 198 to 282; these read ELIQ…RVLK and KIIV…KILQ. Residues 316-520 form a disordered region; sequence LPGGTQVLDG…DHPGHSRHRR (205 aa). 4 positions are modified to phosphoserine: Ser-330, Ser-338, Ser-348, and Ser-351. Positions 357–367 are enriched in basic and acidic residues; sequence RRLEGAKKAKA. Residue Ser-369 is modified to Phosphoserine. The span at 376–390 shows a compositional bias: basic and acidic residues; it reads KGRESRSRSRSREQS. Residues 385 to 423 form an RS region; it reads RSREQSYSRSPSRSASPKRRKSDSGSTSGGSKSQSRSRS. Over residues 408-436 the composition is skewed to low complexity; the sequence is SGSTSGGSKSQSRSRSRSDSPPRQAPRSA. The span at 441 to 454 shows a compositional bias: basic and acidic residues; the sequence is SEIRGSRKSKDCKY. Basic residues predominate over residues 456–471; the sequence is QKPHKSRSRSSSRSRS. 2 stretches are compositionally biased toward basic and acidic residues: residues 472–481 and 489–514; these read RSRERADNPG and YYRD…DHPG.

Belongs to the cyclin family. Cyclin L subfamily. As to quaternary structure, interacts with CDK11A, CDK11B, CDK12, CDK13 and POLR2A, the hyperphosphorylated C-terminal domain (CTD) of RNA polymerase II. May form a ternary complex with CDK11B and casein kinase II (CKII). Interacts with pre-mRNA-splicing factors, including at least SRSF1, SRSF2 AND SRSF7/SLU7. As to expression, widely expressed.

It localises to the nucleus speckle. The protein localises to the nucleus. The protein resides in the nucleoplasm. Its function is as follows. Involved in pre-mRNA splicing. May induce cell death, possibly by acting on the transcription and RNA processing of apoptosis-related factors. In Homo sapiens (Human), this protein is Cyclin-L2 (CCNL2).